A 304-amino-acid polypeptide reads, in one-letter code: Coenzyme PQQ synthesis protein B (304 aa).

This sequence belongs to the PqqB family.

It participates in cofactor biosynthesis; pyrroloquinoline quinone biosynthesis. Functionally, may be involved in the transport of PQQ or its precursor to the periplasm. This chain is Coenzyme PQQ synthesis protein B, found in Pseudomonas aeruginosa (strain ATCC 15692 / DSM 22644 / CIP 104116 / JCM 14847 / LMG 12228 / 1C / PRS 101 / PAO1).